Consider the following 160-residue polypeptide: 6,7-dimethyl-8-ribityllumazine synthase (160 aa).

5-amino-6-(D-ribitylamino)uracil contacts are provided by residues phenylalanine 28, 62-64 (ALE), and 86-88 (AVI). Residue 91 to 92 (ET) coordinates (2S)-2-hydroxy-3-oxobutyl phosphate. Catalysis depends on histidine 94, which acts as the Proton donor. Position 119 (asparagine 119) interacts with 5-amino-6-(D-ribitylamino)uracil. Residue arginine 133 participates in (2S)-2-hydroxy-3-oxobutyl phosphate binding.

Belongs to the DMRL synthase family.

It catalyses the reaction (2S)-2-hydroxy-3-oxobutyl phosphate + 5-amino-6-(D-ribitylamino)uracil = 6,7-dimethyl-8-(1-D-ribityl)lumazine + phosphate + 2 H2O + H(+). The protein operates within cofactor biosynthesis; riboflavin biosynthesis; riboflavin from 2-hydroxy-3-oxobutyl phosphate and 5-amino-6-(D-ribitylamino)uracil: step 1/2. Its function is as follows. Catalyzes the formation of 6,7-dimethyl-8-ribityllumazine by condensation of 5-amino-6-(D-ribitylamino)uracil with 3,4-dihydroxy-2-butanone 4-phosphate. This is the penultimate step in the biosynthesis of riboflavin. This Nitrosospira multiformis (strain ATCC 25196 / NCIMB 11849 / C 71) protein is 6,7-dimethyl-8-ribityllumazine synthase.